A 212-amino-acid chain; its full sequence is 3-demethoxyubiquinol 3-hydroxylase (212 aa).

The interval 21–42 (SRMSRPLPVPQESAVTEAAPEL) is disordered. 6 residues coordinate Fe cation: Glu61, Glu91, His94, Glu143, Glu175, and His178.

This sequence belongs to the COQ7 family. Requires Fe cation as cofactor.

The protein localises to the cell membrane. It catalyses the reaction a 5-methoxy-2-methyl-3-(all-trans-polyprenyl)benzene-1,4-diol + AH2 + O2 = a 3-demethylubiquinol + A + H2O. Its pathway is cofactor biosynthesis; ubiquinone biosynthesis. Catalyzes the hydroxylation of 2-nonaprenyl-3-methyl-6-methoxy-1,4-benzoquinol during ubiquinone biosynthesis. The chain is 3-demethoxyubiquinol 3-hydroxylase from Paraburkholderia xenovorans (strain LB400).